We begin with the raw amino-acid sequence, 325 residues long: GMP reductase (325 aa).

Cys174 acts as the Thioimidate intermediate in catalysis. Ile203–Val226 contributes to the NADP(+) binding site.

The protein belongs to the IMPDH/GMPR family. GuaC type 2 subfamily.

It catalyses the reaction IMP + NH4(+) + NADP(+) = GMP + NADPH + 2 H(+). In terms of biological role, catalyzes the irreversible NADPH-dependent deamination of GMP to IMP. It functions in the conversion of nucleobase, nucleoside and nucleotide derivatives of G to A nucleotides, and in maintaining the intracellular balance of A and G nucleotides. The chain is GMP reductase from Enterococcus faecalis (strain ATCC 700802 / V583).